We begin with the raw amino-acid sequence, 160 residues long: 2-C-methyl-D-erythritol 2,4-cyclodiphosphate synthase (160 aa).

The a divalent metal cation site is built by aspartate 8 and histidine 10. 4-CDP-2-C-methyl-D-erythritol 2-phosphate is bound by residues 8 to 10 and 34 to 35; these read DVH and HS. An a divalent metal cation-binding site is contributed by histidine 42. 4-CDP-2-C-methyl-D-erythritol 2-phosphate contacts are provided by residues 56–58, 61–65, 100–106, 132–135, phenylalanine 139, and arginine 142; these read DIG, FPDTD, AQAPKML, and TTTE.

It belongs to the IspF family. As to quaternary structure, homotrimer. Requires a divalent metal cation as cofactor.

The catalysed reaction is 4-CDP-2-C-methyl-D-erythritol 2-phosphate = 2-C-methyl-D-erythritol 2,4-cyclic diphosphate + CMP. It functions in the pathway isoprenoid biosynthesis; isopentenyl diphosphate biosynthesis via DXP pathway; isopentenyl diphosphate from 1-deoxy-D-xylulose 5-phosphate: step 4/6. Its function is as follows. Involved in the biosynthesis of isopentenyl diphosphate (IPP) and dimethylallyl diphosphate (DMAPP), two major building blocks of isoprenoid compounds. Catalyzes the conversion of 4-diphosphocytidyl-2-C-methyl-D-erythritol 2-phosphate (CDP-ME2P) to 2-C-methyl-D-erythritol 2,4-cyclodiphosphate (ME-CPP) with a corresponding release of cytidine 5-monophosphate (CMP). The polypeptide is 2-C-methyl-D-erythritol 2,4-cyclodiphosphate synthase (Proteus mirabilis (strain HI4320)).